The following is a 210-amino-acid chain: tRNA (guanine-N(7)-)-methyltransferase (210 aa).

The S-adenosyl-L-methionine site is built by E36, E61, D90, and D112. D112 is an active-site residue. Substrate is bound by residues K116, D148, and 188–191 (TEYE).

Belongs to the class I-like SAM-binding methyltransferase superfamily. TrmB family.

It carries out the reaction guanosine(46) in tRNA + S-adenosyl-L-methionine = N(7)-methylguanosine(46) in tRNA + S-adenosyl-L-homocysteine. It functions in the pathway tRNA modification; N(7)-methylguanine-tRNA biosynthesis. Functionally, catalyzes the formation of N(7)-methylguanine at position 46 (m7G46) in tRNA. The polypeptide is tRNA (guanine-N(7)-)-methyltransferase (Mycoplasma genitalium (strain ATCC 33530 / DSM 19775 / NCTC 10195 / G37) (Mycoplasmoides genitalium)).